The chain runs to 420 residues: Glucose-1-phosphate adenylyltransferase (420 aa).

Residues tyrosine 107, glycine 172, 187–188, and serine 205 contribute to the alpha-D-glucose 1-phosphate site; that span reads EK.

It belongs to the bacterial/plant glucose-1-phosphate adenylyltransferase family. Homotetramer.

It carries out the reaction alpha-D-glucose 1-phosphate + ATP + H(+) = ADP-alpha-D-glucose + diphosphate. It functions in the pathway glycan biosynthesis; glycogen biosynthesis. In terms of biological role, involved in the biosynthesis of ADP-glucose, a building block required for the elongation reactions to produce glycogen. Catalyzes the reaction between ATP and alpha-D-glucose 1-phosphate (G1P) to produce pyrophosphate and ADP-Glc. In Rhizobium leguminosarum bv. trifolii (strain WSM2304), this protein is Glucose-1-phosphate adenylyltransferase.